Consider the following 715-residue polypeptide: Polyribonucleotide nucleotidyltransferase (715 aa).

Residues Asp-493 and Asp-499 each coordinate Mg(2+). One can recognise a KH domain in the interval 560 to 619; the sequence is PRMITIKINPEKIRDVIGKGGSVIRALTEETGTTIDISDDGVVTIASTSSEGMAEAKKRI. Residues 629–697 form the S1 motif domain; sequence GQVYEGTVLK…EKGRVRLSAK (69 aa).

This sequence belongs to the polyribonucleotide nucleotidyltransferase family. The cofactor is Mg(2+).

The protein localises to the cytoplasm. The catalysed reaction is RNA(n+1) + phosphate = RNA(n) + a ribonucleoside 5'-diphosphate. Functionally, involved in mRNA degradation. Catalyzes the phosphorolysis of single-stranded polyribonucleotides processively in the 3'- to 5'-direction. The protein is Polyribonucleotide nucleotidyltransferase of Burkholderia multivorans (strain ATCC 17616 / 249).